Consider the following 115-residue polypeptide: Class I hydrophobin 21 (115 aa).

A signal peptide spans 1–20; that stretch reads MFAAPATMLVLAALAALSSA. Cystine bridges form between Cys-30-Cys-93, Cys-37-Cys-87, Cys-38-Cys-77, and Cys-94-Cys-107.

It belongs to the fungal hydrophobin family. As to quaternary structure, self-assembles to form functional amyloid fibrils called rodlets. Self-assembly into fibrillar rodlets occurs spontaneously at hydrophobic:hydrophilic interfaces and the rodlets further associate laterally to form amphipathic monolayers.

The protein localises to the secreted. The protein resides in the cell wall. Its function is as follows. Aerial growth, conidiation, and dispersal of filamentous fungi in the environment rely upon a capability of their secreting small amphipathic proteins called hydrophobins (HPBs) with low sequence identity. Class I can self-assemble into an outermost layer of rodlet bundles on aerial cell surfaces, conferring cellular hydrophobicity that supports fungal growth, development and dispersal; whereas Class II form highly ordered films at water-air interfaces through intermolecular interactions but contribute nothing to the rodlet structure. This chain is Class I hydrophobin 21, found in Pleurotus ostreatus (strain PC15) (Oyster mushroom).